The following is a 90-amino-acid chain: Putative defensin-like protein 168 (90 aa).

Residues 1–27 (MKYFTLFMISYIFISIFVFSHIHDVEA) form the signal peptide. Disulfide bonds link cysteine 32–cysteine 90, cysteine 43–cysteine 66, cysteine 51–cysteine 84, and cysteine 64–cysteine 86.

It belongs to the DEFL family.

The protein localises to the secreted. The protein is Putative defensin-like protein 168 of Arabidopsis thaliana (Mouse-ear cress).